The following is a 138-amino-acid chain: MWKDLPQNVPRIPRIQVPAAAADNSLLKDLNQGQRCYLYSIMRIYDSRPQWKALQTRYIHSLGYQQHLGYITQQEALSCAAVLRHSTMRASATVAPQRTILPRVFSHAKKGQPAKPGFRVGSRASLHSMLSTKTLDKA.

Belongs to the FAM216 family.

The sequence is that of Protein FAM216B (Fam216b) from Mus musculus (Mouse).